A 66-amino-acid chain; its full sequence is Small vasohibin-binding protein (66 aa).

The segment covering 1 to 23 has biased composition (basic and acidic residues); that stretch reads MDPPARKEKSKVKEPAFRVEKAK. A disordered region spans residues 1 to 30; sequence MDPPARKEKSKVKEPAFRVEKAKQKSAQQE. The stretch at 5 to 52 forms a coiled coil; sequence ARKEKSKVKEPAFRVEKAKQKSAQQELKQRQRAEIYALNRVMTELEQQ.

Belongs to the SVBP family. As to quaternary structure, interacts with VASH1 and VASH2. As to expression, highly expressed in bone marrow, spleen and testis.

It is found in the cytoplasm. Its subcellular location is the secreted. The protein localises to the cytoskeleton. In terms of biological role, enhances the tyrosine carboxypeptidase activity of VASH1 and VASH2, thereby promoting the removal of the C-terminal tyrosine residue of alpha-tubulin. Also required to enhance the solubility and secretion of VASH1 and VASH2. Plays a role in axon and excitatory synapse formation. In Mus musculus (Mouse), this protein is Small vasohibin-binding protein.